We begin with the raw amino-acid sequence, 458 residues long: MQLRKMQTLKKEHGSVDTSSNVDKIMVLKSTLAEVSEELSTNEDILLTEASSGKSKSSACRRKREFIPDEKKDAMYWEKRRKNNEAAKRSREKRRLNDLVLENKLIALGEENATLKAELLSLKLKFGLISSASYAQEIQKLSSSTTVYFQDYQSSKPNINSFVDEHEPSVVGSSCISVIKHSPQSSMSDMSEMPSVEHTQGSRIQSNCRSPENKFQIIKQEPIELEREPRDDRGSYKASIYPNYMGTTFNMYSHSPPLLQVNRSSSNSPRTSETDDGVVGKSSDGEDEQQVPKGPIHSPVEHKNVHATVKVPEVNSSALPHKLRIKAKAMQVKVEAMDNDYDATQKLSSPIDMSSKRHFELEKHGAQNLVHSSHTPFSVQVTNIQDWSLKPELWHQKELNVKIQNGCKTGVVEIKDNVYNVSESENLYLKQGIANLSAEVASLKRLITTQQISASDSG.

In terms of domain architecture, bZIP spans 73–136 (DAMYWEKRRK…GLISSASYAQ (64 aa)). Residues 79 to 95 (KRRKNNEAAKRSREKRR) form a basic motif region. A leucine-zipper region spans residues 99-106 (LVLENKLI). Position 182 is a phosphoserine; by CSNK1E (S182). Disordered stretches follow at residues 218–238 (IKQE…SYKA) and 255–303 (SPPL…VEHK). The segment covering 221–235 (EPIELEREPRDDRGS) has biased composition (basic and acidic residues). Positions 261-271 (VNRSSSNSPRT) are enriched in polar residues.

The protein belongs to the bZIP family. NFIL3 subfamily. Homodimer. Binds DNA as a dimer. Phosphorylated. Phosphorylated on Ser-182. Phosphorylation may require prime phosphorylation(s). Phosphorylation takes place at specific times of the day. Phosphorylation leads to its down-regulation through proteasome-dependent degradation.

It is found in the cytoplasm. It localises to the nucleus. Acts as a transcriptional regulator. Represses PER2 transcription through a recognition sequence in the promoter. Component of the circadian clock that may contribute to the rhythmic expression of PER2 gene in a light-dependent and time-of-day-dependent manner. The chain is Nuclear factor interleukin-3-regulated protein (NFIL3) from Gallus gallus (Chicken).